A 161-amino-acid polypeptide reads, in one-letter code: NADH-quinone oxidoreductase subunit I (161 aa).

2 consecutive 4Fe-4S ferredoxin-type domains span residues 52–82 (LRRYPNGEERCIACKLCEAICPAMAITIESE) and 92–121 (SRYDIDLTKCIFCGFCEEACPVDAVVETRV). Residues Cys62, Cys65, Cys68, Cys72, Cys101, Cys104, Cys107, and Cys111 each contribute to the [4Fe-4S] cluster site.

It belongs to the complex I 23 kDa subunit family. NDH-1 is composed of 14 different subunits. Subunits NuoA, H, J, K, L, M, N constitute the membrane sector of the complex. The cofactor is [4Fe-4S] cluster.

The protein resides in the cell inner membrane. The catalysed reaction is a quinone + NADH + 5 H(+)(in) = a quinol + NAD(+) + 4 H(+)(out). In terms of biological role, NDH-1 shuttles electrons from NADH, via FMN and iron-sulfur (Fe-S) centers, to quinones in the respiratory chain. The immediate electron acceptor for the enzyme in this species is believed to be ubiquinone. Couples the redox reaction to proton translocation (for every two electrons transferred, four hydrogen ions are translocated across the cytoplasmic membrane), and thus conserves the redox energy in a proton gradient. The polypeptide is NADH-quinone oxidoreductase subunit I (Azoarcus sp. (strain BH72)).